A 459-amino-acid polypeptide reads, in one-letter code: WD repeat-containing protein 41 (459 aa).

6 WD repeats span residues 40–79 (KAHH…KLLE), 82–128 (GHTQ…QVQR), 131–168 (CFQS…LCKT), 220–258 (DHQD…MQAY), 321–359 (AHDS…QLAA), and 403–441 (GHSS…SGLR).

As to quaternary structure, component of the C9orf72-SMCR8 complex, at least composed of C9orf72, SMCR8 and WDR41. The complex is formed of two protomers, each individually consisting of one molecule each of C9orf72, SMCR8 and WDR41. The protomers homodimerize via an interaction between C9orf72 (via C-terminus) and SMCR8 (via N-terminus). Within each protomer SMCR8 (via DENN domain) acts as a bridging protein between WDR41 (via C-terminus and N-terminus) and C9orf72 (via C-terminus). The C9orf72-SMCR8 complex associates with the ULK1/ATG1 kinase complex.

The protein localises to the cytoplasm. In terms of biological role, non-catalytic component of the C9orf72-SMCR8 complex, a complex that has guanine nucleotide exchange factor (GEF) activity and regulates autophagy. The C9orf72-SMCR8 complex promotes the exchange of GDP to GTP, converting inactive GDP-bound RAB8A and RAB39B into their active GTP-bound form, thereby promoting autophagosome maturation. As part of the C9orf72-SMCR8 complex, stimulates RAB8A and RAB11A GTPase activity in vitro, however WDR42 is shown not be an essential complex component for this function. The C9orf72-SMCR8 complex also acts as a negative regulator of autophagy initiation by interacting with the ULK1/ATG1 kinase complex and inhibiting its protein kinase activity. The sequence is that of WD repeat-containing protein 41 from Homo sapiens (Human).